Consider the following 367-residue polypeptide: MEANGFGLQNFPELKNDTFLRAAWGEETDYTPVWCMRQAGRYLPEFRETRAAQDFFSTCRSPEACCELTLQPLRRFPLDAAIIFSDILVVPQALGMEVTMVPGKGPSFPEPLREERDLERLRDPAAAASELGYVFQAITLTRQRLAGRVPLIGFAGAPWTLMTYMVEGGSSSTMAQAKRWLYQRPQASHKLLGILTDVLVPYLIGQVAAGAQALQLFESHAGHLGTELFSKFALPYIRDVAKRVKAGLQKAGLAPVPMIIFAKDGHFALEELAQAGYEVVGLDWTVAPKKARERVGKAVTLQGNLDPCALYASEEEIGRLVQQMLDDFGPQRYIANLGHGLYPDMDPERVGAFVDAVHKHSRLLRQN.

An N-acetylmethionine modification is found at methionine 1. 8 residues coordinate coproporphyrinogen I: arginine 37, alanine 39, arginine 41, arginine 50, aspartate 86, tyrosine 164, serine 219, and histidine 339. Arginine 37, alanine 39, and arginine 41 together coordinate coproporphyrinogen III. 4 residues coordinate coproporphyrinogen III: aspartate 86, tyrosine 164, serine 219, and histidine 339.

It belongs to the uroporphyrinogen decarboxylase family. Homodimer.

Its subcellular location is the cytoplasm. The protein resides in the cytosol. The catalysed reaction is uroporphyrinogen III + 4 H(+) = coproporphyrinogen III + 4 CO2. It carries out the reaction uroporphyrinogen I + 4 H(+) = coproporphyrinogen I + 4 CO2. It functions in the pathway porphyrin-containing compound metabolism; protoporphyrin-IX biosynthesis; coproporphyrinogen-III from 5-aminolevulinate: step 4/4. Functionally, catalyzes the sequential decarboxylation of the four acetate side chains of uroporphyrinogen to form coproporphyrinogen and participates in the fifth step in the heme biosynthetic pathway. Isomer I or isomer III of uroporphyrinogen may serve as substrate, but only coproporphyrinogen III can ultimately be converted to heme. In vitro also decarboxylates pentacarboxylate porphyrinogen I. In Mus musculus (Mouse), this protein is Uroporphyrinogen decarboxylase.